The primary structure comprises 1183 residues: DNA-directed RNA polymerase subunit beta (1183 aa).

This sequence belongs to the RNA polymerase beta chain family. As to quaternary structure, the RNAP catalytic core consists of 2 alpha, 1 beta, 1 beta' and 1 omega subunit. When a sigma factor is associated with the core the holoenzyme is formed, which can initiate transcription.

It carries out the reaction RNA(n) + a ribonucleoside 5'-triphosphate = RNA(n+1) + diphosphate. Functionally, DNA-dependent RNA polymerase catalyzes the transcription of DNA into RNA using the four ribonucleoside triphosphates as substrates. The polypeptide is DNA-directed RNA polymerase subunit beta (Staphylococcus aureus (strain Mu3 / ATCC 700698)).